The following is a 732-amino-acid chain: Putative pectinesterase/pectinesterase inhibitor 28 (732 aa).

Residues valine 17–valine 37 form a helical membrane-spanning segment. Asparagine 40, asparagine 93, asparagine 278, and asparagine 297 each carry an N-linked (GlcNAc...) asparagine glycan. Positions threonine 51–methionine 204 are pectinesterase inhibitor 28. Residues aspartate 252–aspartate 548 form a pectinesterase 28 region. Residues threonine 327 and glutamine 357 each coordinate substrate. Catalysis depends on aspartate 380, which acts as the Proton donor; for pectinesterase activity. A disulfide bridge links cysteine 394 with cysteine 414. The active-site Nucleophile; for pectinesterase activity is aspartate 401. A glycan (N-linked (GlcNAc...) asparagine) is linked at asparagine 413. The substrate site is built by arginine 469 and tryptophan 471. 3 N-linked (GlcNAc...) asparagine glycosylation sites follow: asparagine 566, asparagine 570, and asparagine 581. 2 stretches are compositionally biased toward low complexity: residues asparagine 570–serine 620 and proline 633–glycine 732. The segment at asparagine 570–glycine 732 is disordered.

This sequence in the N-terminal section; belongs to the PMEI family. It in the C-terminal section; belongs to the pectinesterase family. Expressed in flower buds.

It is found in the membrane. The enzyme catalyses [(1-&gt;4)-alpha-D-galacturonosyl methyl ester](n) + n H2O = [(1-&gt;4)-alpha-D-galacturonosyl](n) + n methanol + n H(+). The protein operates within glycan metabolism; pectin degradation; 2-dehydro-3-deoxy-D-gluconate from pectin: step 1/5. In terms of biological role, acts in the modification of cell walls via demethylesterification of cell wall pectin. The chain is Putative pectinesterase/pectinesterase inhibitor 28 (PME28) from Arabidopsis thaliana (Mouse-ear cress).